A 197-amino-acid chain; its full sequence is Probable molybdenum cofactor guanylyltransferase (197 aa).

Residues 10-12, Lys22, Asp73, and Asp102 contribute to the GTP site; that span reads LCG. Asp102 contacts Mg(2+).

It belongs to the MobA family. Requires Mg(2+) as cofactor.

It is found in the cytoplasm. The enzyme catalyses Mo-molybdopterin + GTP + H(+) = Mo-molybdopterin guanine dinucleotide + diphosphate. Transfers a GMP moiety from GTP to Mo-molybdopterin (Mo-MPT) cofactor (Moco or molybdenum cofactor) to form Mo-molybdopterin guanine dinucleotide (Mo-MGD) cofactor. This chain is Probable molybdenum cofactor guanylyltransferase, found in Methanothermobacter thermautotrophicus (strain ATCC 29096 / DSM 1053 / JCM 10044 / NBRC 100330 / Delta H) (Methanobacterium thermoautotrophicum).